We begin with the raw amino-acid sequence, 196 residues long: Peptidyl-tRNA hydrolase (196 aa).

Residue Tyr-17 coordinates tRNA. Residue His-22 is the Proton acceptor of the active site. Residues Phe-68, Asn-70, and Asn-116 each contribute to the tRNA site.

The protein belongs to the PTH family. As to quaternary structure, monomer.

The protein localises to the cytoplasm. The catalysed reaction is an N-acyl-L-alpha-aminoacyl-tRNA + H2O = an N-acyl-L-amino acid + a tRNA + H(+). In terms of biological role, hydrolyzes ribosome-free peptidyl-tRNAs (with 1 or more amino acids incorporated), which drop off the ribosome during protein synthesis, or as a result of ribosome stalling. Catalyzes the release of premature peptidyl moieties from peptidyl-tRNA molecules trapped in stalled 50S ribosomal subunits, and thus maintains levels of free tRNAs and 50S ribosomes. The protein is Peptidyl-tRNA hydrolase of Serratia proteamaculans (strain 568).